The chain runs to 175 residues: B9 domain-containing protein 2 (175 aa).

One can recognise a C2 B9-type domain in the interval 2–118 (AEVHVIGQII…DCPTWRPLGS (117 aa)).

This sequence belongs to the B9D family. As to quaternary structure, part of the tectonic-like complex (also named B9 complex). Interacts with TUBG1.

It is found in the cytoplasm. It localises to the cytoskeleton. Its subcellular location is the cilium basal body. The protein resides in the cilium axoneme. The protein localises to the nucleus. In terms of biological role, component of the tectonic-like complex, a complex localized at the transition zone of primary cilia and acting as a barrier that prevents diffusion of transmembrane proteins between the cilia and plasma membranes. The polypeptide is B9 domain-containing protein 2 (B9d2) (Rattus norvegicus (Rat)).